Consider the following 236-residue polypeptide: Biosynthetic peptidoglycan transglycosylase (236 aa).

A helical membrane pass occupies residues 12–31 (ALLWFAASSIVLVLVFRWVP).

It belongs to the glycosyltransferase 51 family.

The protein resides in the cell inner membrane. It carries out the reaction [GlcNAc-(1-&gt;4)-Mur2Ac(oyl-L-Ala-gamma-D-Glu-L-Lys-D-Ala-D-Ala)](n)-di-trans,octa-cis-undecaprenyl diphosphate + beta-D-GlcNAc-(1-&gt;4)-Mur2Ac(oyl-L-Ala-gamma-D-Glu-L-Lys-D-Ala-D-Ala)-di-trans,octa-cis-undecaprenyl diphosphate = [GlcNAc-(1-&gt;4)-Mur2Ac(oyl-L-Ala-gamma-D-Glu-L-Lys-D-Ala-D-Ala)](n+1)-di-trans,octa-cis-undecaprenyl diphosphate + di-trans,octa-cis-undecaprenyl diphosphate + H(+). It participates in cell wall biogenesis; peptidoglycan biosynthesis. Peptidoglycan polymerase that catalyzes glycan chain elongation from lipid-linked precursors. The protein is Biosynthetic peptidoglycan transglycosylase of Pseudomonas putida (strain GB-1).